We begin with the raw amino-acid sequence, 385 residues long: Probable alpha-galactosidase (385 aa).

The first 19 residues, 1–19, serve as a signal peptide directing secretion; it reads MMKIAATLLATIALATVNA. 2 cysteine pairs are disulfide-bonded: cysteine 40–cysteine 72 and cysteine 119–cysteine 149. The Nucleophile role is filled by aspartate 147. Residue 180–184 coordinates substrate; the sequence is DWGYE. Aspartate 202 acts as the Proton donor in catalysis.

The protein belongs to the glycosyl hydrolase 27 family.

It catalyses the reaction Hydrolysis of terminal, non-reducing alpha-D-galactose residues in alpha-D-galactosides, including galactose oligosaccharides, galactomannans and galactolipids.. The chain is Probable alpha-galactosidase (melA) from Dictyostelium discoideum (Social amoeba).